We begin with the raw amino-acid sequence, 384 residues long: Protein RecA (384 aa).

76-83 (GPESSGKT) contributes to the ATP binding site. A disordered region spans residues 346–365 (QGSAEPEKAAKPEKVEKADK). Positions 350–365 (EPEKAAKPEKVEKADK) are enriched in basic and acidic residues.

Belongs to the RecA family.

It is found in the cytoplasm. Can catalyze the hydrolysis of ATP in the presence of single-stranded DNA, the ATP-dependent uptake of single-stranded DNA by duplex DNA, and the ATP-dependent hybridization of homologous single-stranded DNAs. It interacts with LexA causing its activation and leading to its autocatalytic cleavage. The chain is Protein RecA from Polaromonas naphthalenivorans (strain CJ2).